The sequence spans 38 residues: Photosystem II reaction center protein L (38 aa).

A helical transmembrane segment spans residues 17 to 37 (SLYWGLLLIFVLAILFSNYFF).

This sequence belongs to the PsbL family. In terms of assembly, PSII is composed of 1 copy each of membrane proteins PsbA, PsbB, PsbC, PsbD, PsbE, PsbF, PsbH, PsbI, PsbJ, PsbK, PsbL, PsbM, PsbT, PsbX, PsbY, PsbZ, Psb30/Ycf12, at least 3 peripheral proteins of the oxygen-evolving complex and a large number of cofactors. It forms dimeric complexes.

The protein resides in the plastid. It localises to the chloroplast thylakoid membrane. In terms of biological role, one of the components of the core complex of photosystem II (PSII). PSII is a light-driven water:plastoquinone oxidoreductase that uses light energy to abstract electrons from H(2)O, generating O(2) and a proton gradient subsequently used for ATP formation. It consists of a core antenna complex that captures photons, and an electron transfer chain that converts photonic excitation into a charge separation. This subunit is found at the monomer-monomer interface and is required for correct PSII assembly and/or dimerization. The sequence is that of Photosystem II reaction center protein L from Aethionema cordifolium (Lebanon stonecress).